The sequence spans 451 residues: ATP synthase subunit beta (451 aa).

Residue 143–150 participates in ATP binding; sequence GGAGVGKT.

This sequence belongs to the ATPase alpha/beta chains family. F-type ATPases have 2 components, CF(1) - the catalytic core - and CF(0) - the membrane proton channel. CF(1) has five subunits: alpha(3), beta(3), gamma(1), delta(1), epsilon(1). CF(0) has three main subunits: a(1), b(2) and c(9-12). The alpha and beta chains form an alternating ring which encloses part of the gamma chain. CF(1) is attached to CF(0) by a central stalk formed by the gamma and epsilon chains, while a peripheral stalk is formed by the delta and b chains.

The protein localises to the cell membrane. It carries out the reaction ATP + H2O + 4 H(+)(in) = ADP + phosphate + 5 H(+)(out). Its function is as follows. Produces ATP from ADP in the presence of a proton gradient across the membrane. The catalytic sites are hosted primarily by the beta subunits. The chain is ATP synthase subunit beta from Coprothermobacter proteolyticus (strain ATCC 35245 / DSM 5265 / OCM 4 / BT).